A 274-amino-acid polypeptide reads, in one-letter code: Formamidopyrimidine-DNA glycosylase (274 aa).

The active-site Schiff-base intermediate with DNA is the P2. The Proton donor role is filled by E3. The active-site Proton donor; for beta-elimination activity is K58. H91, R110, and K152 together coordinate DNA. The FPG-type zinc finger occupies 237 to 271 (KVYGRKNLPCLVCENKIETVVIAGRHSAFCPHCQP). R261 acts as the Proton donor; for delta-elimination activity in catalysis.

Belongs to the FPG family. In terms of assembly, monomer. Zn(2+) serves as cofactor.

The enzyme catalyses Hydrolysis of DNA containing ring-opened 7-methylguanine residues, releasing 2,6-diamino-4-hydroxy-5-(N-methyl)formamidopyrimidine.. It carries out the reaction 2'-deoxyribonucleotide-(2'-deoxyribose 5'-phosphate)-2'-deoxyribonucleotide-DNA = a 3'-end 2'-deoxyribonucleotide-(2,3-dehydro-2,3-deoxyribose 5'-phosphate)-DNA + a 5'-end 5'-phospho-2'-deoxyribonucleoside-DNA + H(+). In terms of biological role, involved in base excision repair of DNA damaged by oxidation or by mutagenic agents. Acts as a DNA glycosylase that recognizes and removes damaged bases. Has a preference for oxidized purines, such as 7,8-dihydro-8-oxoguanine (8-oxoG). Has AP (apurinic/apyrimidinic) lyase activity and introduces nicks in the DNA strand. Cleaves the DNA backbone by beta-delta elimination to generate a single-strand break at the site of the removed base with both 3'- and 5'-phosphates. This Legionella pneumophila (strain Paris) protein is Formamidopyrimidine-DNA glycosylase.